A 187-amino-acid polypeptide reads, in one-letter code: dCTP deaminase (187 aa).

DCTP-binding positions include 110–115 (KSTYAR), 134–136 (TLE), Gln155, Tyr169, and Gln179. The active-site Proton donor/acceptor is the Glu136.

It belongs to the dCTP deaminase family. In terms of assembly, homotrimer.

It catalyses the reaction dCTP + H2O + H(+) = dUTP + NH4(+). The protein operates within pyrimidine metabolism; dUMP biosynthesis; dUMP from dCTP (dUTP route): step 1/2. Its function is as follows. Catalyzes the deamination of dCTP to dUTP. The polypeptide is dCTP deaminase (Bordetella petrii (strain ATCC BAA-461 / DSM 12804 / CCUG 43448)).